Reading from the N-terminus, the 371-residue chain is Serine/threonine-protein kinase 17B (371 aa).

Residues 33 to 293 form the Protein kinase domain; it reads TLTPKELGRG…AESCLSHSWL (261 aa). ATP-binding positions include 39 to 47 and K62; that span reads LGRGKFAVV. Residue D158 is the Proton acceptor of the active site. Residues 308–345 are disordered; the sequence is SESSQTQDLSLRSSEDKTPKSCNGSCGDREDKENIPED. The span at 309 to 319 shows a compositional bias: polar residues; that stretch reads ESSQTQDLSLR.

The protein belongs to the protein kinase superfamily. CAMK Ser/Thr protein kinase family. DAP kinase subfamily. As to quaternary structure, interacts with CHP1; the interaction induces CHP1 to translocate from the Golgi to the nucleus. In terms of processing, autophosphorylated. In terms of tissue distribution, highly expressed in thymus, spleen, and testis, lower levels present in the brain.

The protein resides in the nucleus. It localises to the cell membrane. The protein localises to the endoplasmic reticulum-Golgi intermediate compartment. The catalysed reaction is L-seryl-[protein] + ATP = O-phospho-L-seryl-[protein] + ADP + H(+). It carries out the reaction L-threonyl-[protein] + ATP = O-phospho-L-threonyl-[protein] + ADP + H(+). Acts as a positive regulator of apoptosis. Phosphorylates myosin light chains. This is Serine/threonine-protein kinase 17B (Stk17b) from Rattus norvegicus (Rat).